Consider the following 358-residue polypeptide: MGKVKRNAPCPCGSGKKYKKCCGSKVVDFPAELAAKEAKQIQEDLVEYAFTVHRESISGFINQHDFLSAMDRQTKDISVFNLGIWGIFFHPLAGEKTIFEEYLQKKGDSITRPKTREIVESWQSMTPALLLLKDLKEGIIHFEDVITAKQFEVEMDASNQDLPPVGSLILGYPIHEAEKAEFFMQFTIFPVKRTEALISKVKKYADAAVKDGKTPEDFMKQEFNNVLFALLAEKDEEPQAEKAEVSTVEWANDLEKETAAAIEEGMSGEEYPTELIPAVIDIWKTFCEKKSPVIRKPEAFAAAVEYYVNAISLNGASVSQAKLAKKYGVSASTISSRYKEIESTLQDEADRFAQALSS.

207-214 contacts ATP; it reads AAVKDGKT.

This is an uncharacterized protein from Bacillus subtilis (strain 168).